A 185-amino-acid polypeptide reads, in one-letter code: Biogenesis of lysosome-related organelles complex 1 subunit 5 (185 aa).

The segment covering 1 to 16 (MSSSNSPVKSTGSPFI) has biased composition (polar residues). The segment at 1 to 24 (MSSSNSPVKSTGSPFIQSLKPRDN) is disordered. Residues 98 to 182 (MQDQLASVLK…VTMEKELSKQ (85 aa)) are a coiled coil.

It belongs to the BLOC1S5 family. Component of the biogenesis of lysosome-related organelles complex 1 (BLOC-1).

Its function is as follows. Component of the BLOC-1 complex, a complex that is required for normal biogenesis of lysosome-related organelles (LRO), such as platelet dense granules and melanosomes. Plays a role in intracellular vesicle trafficking. The polypeptide is Biogenesis of lysosome-related organelles complex 1 subunit 5 (bloc1s5) (Xenopus tropicalis (Western clawed frog)).